A 116-amino-acid chain; its full sequence is Heme-degrading monooxygenase (116 aa).

Residues 2–92 (VIVTNTSKIT…EYILENKISF (91 aa)) form the ABM domain. Asn-6 serves as a coordination point for Fe cation. Residue His-76 participates in heme binding.

The protein belongs to the antibiotic biosynthesis monooxygenase family. Heme-degrading monooxygenase IsdG subfamily. Homodimer.

It is found in the cytoplasm. It catalyses the reaction heme b + 3 reduced [NADPH--hemoprotein reductase] + 3 O2 = biliverdin IXalpha + CO + Fe(2+) + 3 oxidized [NADPH--hemoprotein reductase] + 3 H2O + H(+). Its function is as follows. Allows bacterial pathogens to use the host heme as an iron source. Catalyzes the oxidative degradation of the heme macrocyclic porphyrin ring to the biliverdin in the presence of a suitable electron donor such as ascorbate or NADPH--cytochrome P450 reductase, with subsequent release of free iron. The protein is Heme-degrading monooxygenase of Halalkalibacterium halodurans (strain ATCC BAA-125 / DSM 18197 / FERM 7344 / JCM 9153 / C-125) (Bacillus halodurans).